Consider the following 199-residue polypeptide: Chaperone protein TorD (199 aa).

It belongs to the TorD/DmsD family. TorD subfamily.

The protein localises to the cytoplasm. In terms of biological role, involved in the biogenesis of TorA. Acts on TorA before the insertion of the molybdenum cofactor and, as a result, probably favors a conformation of the apoenzyme that is competent for acquiring the cofactor. The polypeptide is Chaperone protein TorD (Escherichia coli O157:H7 (strain EC4115 / EHEC)).